Consider the following 272-residue polypeptide: MFINIEPLYSSMVENIKERVSKLSKPPKLVAVTCQPDSSTLAYLRSQEKQAKRFGIDFAVYEAPKAMDLKILLPKLSADGSVNGIFLTHPLPSDISEYEAVSLISPDKDIEGRHPINLGNILYDKPVFPPCTAEAVLRIINYLTNPSGKKIAVIGRSVTVGKPLAMLLLQKGIDATVTICHSRTKDIAEITKNSDIVVVAIGKAKMFGKDYFKPGTIVIDVGINVEGDEIVGDVDPSVSEICELTPVPGGVGRITTLVLMEHTVKAAEMSLK.

NADP(+)-binding positions include 155 to 157, serine 182, and isoleucine 223; that span reads GRS.

This sequence belongs to the tetrahydrofolate dehydrogenase/cyclohydrolase family. As to quaternary structure, homodimer.

It catalyses the reaction (6R)-5,10-methylene-5,6,7,8-tetrahydrofolate + NADP(+) = (6R)-5,10-methenyltetrahydrofolate + NADPH. The catalysed reaction is (6R)-5,10-methenyltetrahydrofolate + H2O = (6R)-10-formyltetrahydrofolate + H(+). It participates in one-carbon metabolism; tetrahydrofolate interconversion. In terms of biological role, catalyzes the oxidation of 5,10-methylenetetrahydrofolate to 5,10-methenyltetrahydrofolate and then the hydrolysis of 5,10-methenyltetrahydrofolate to 10-formyltetrahydrofolate. The chain is Bifunctional protein FolD from Fervidobacterium nodosum (strain ATCC 35602 / DSM 5306 / Rt17-B1).